The sequence spans 106 residues: UPF0145 protein TM_0763 (106 aa).

This sequence belongs to the UPF0145 family.

This chain is UPF0145 protein TM_0763, found in Thermotoga maritima (strain ATCC 43589 / DSM 3109 / JCM 10099 / NBRC 100826 / MSB8).